The following is a 157-amino-acid chain: S-ribosylhomocysteine lyase (157 aa).

His-54, His-58, and Cys-126 together coordinate Fe cation.

Belongs to the LuxS family. Homodimer. Fe cation is required as a cofactor.

It carries out the reaction S-(5-deoxy-D-ribos-5-yl)-L-homocysteine = (S)-4,5-dihydroxypentane-2,3-dione + L-homocysteine. In terms of biological role, involved in the synthesis of autoinducer 2 (AI-2) which is secreted by bacteria and is used to communicate both the cell density and the metabolic potential of the environment. The regulation of gene expression in response to changes in cell density is called quorum sensing. Catalyzes the transformation of S-ribosylhomocysteine (RHC) to homocysteine (HC) and 4,5-dihydroxy-2,3-pentadione (DPD). This chain is S-ribosylhomocysteine lyase, found in Bacillus cereus (strain G9842).